We begin with the raw amino-acid sequence, 280 residues long: MKKEKLRTENISFQYPGAATYALKDVSFSLFEGEWVSVIGQNGSGKSTLAKLLNGLFLPEAGTITVNDTMILSEETVWDVRKQIGMVFQNPDNQFVGTTVQDDVVFGLENIGMPREQMVERLNQALRLVRMEDFLNDEPHSLSGGQKQRVAIAGVLALQPSILILDEATSMLDPQGRREVVETVRQLVNEKGITVLSITHDLEEAAQSDRVIILNKGEILEEGTPEQIFKSSHMLQEIGLDVPFSVKIAELLKRNEILLQNTHLTMESLVNELWRLHSKK.

The ABC transporter domain occupies 6-241 (LRTENISFQY…SHMLQEIGLD (236 aa)). 40–47 (GQNGSGKS) is a binding site for ATP.

This sequence belongs to the ABC transporter superfamily. Energy-coupling factor EcfA family. As to quaternary structure, forms a stable energy-coupling factor (ECF) transporter complex composed of 2 membrane-embedded substrate-binding proteins (S component), 2 ATP-binding proteins (A component) and 2 transmembrane proteins (T component).

The protein resides in the cell membrane. Its function is as follows. ATP-binding (A) component of a common energy-coupling factor (ECF) ABC-transporter complex. Unlike classic ABC transporters this ECF transporter provides the energy necessary to transport a number of different substrates. In Bacillus thuringiensis subsp. konkukian (strain 97-27), this protein is Energy-coupling factor transporter ATP-binding protein EcfA1.